The chain runs to 488 residues: Protein nucleotidyltransferase YdiU (488 aa).

ATP is bound by residues Gly91, Gly93, Arg94, Lys114, Asp126, Gly127, Arg177, and Arg184. The tract at residues 108 to 127 (RFDIQLKGSGPTPYSRRGDG) is disordered. The active-site Proton acceptor is Asp253. Mg(2+)-binding residues include Asn254 and Asp263. Position 263 (Asp263) interacts with ATP.

The protein belongs to the SELO family. Mg(2+) is required as a cofactor. Mn(2+) serves as cofactor.

The catalysed reaction is L-seryl-[protein] + ATP = 3-O-(5'-adenylyl)-L-seryl-[protein] + diphosphate. It catalyses the reaction L-threonyl-[protein] + ATP = 3-O-(5'-adenylyl)-L-threonyl-[protein] + diphosphate. The enzyme catalyses L-tyrosyl-[protein] + ATP = O-(5'-adenylyl)-L-tyrosyl-[protein] + diphosphate. It carries out the reaction L-histidyl-[protein] + UTP = N(tele)-(5'-uridylyl)-L-histidyl-[protein] + diphosphate. The catalysed reaction is L-seryl-[protein] + UTP = O-(5'-uridylyl)-L-seryl-[protein] + diphosphate. It catalyses the reaction L-tyrosyl-[protein] + UTP = O-(5'-uridylyl)-L-tyrosyl-[protein] + diphosphate. Functionally, nucleotidyltransferase involved in the post-translational modification of proteins. It can catalyze the addition of adenosine monophosphate (AMP) or uridine monophosphate (UMP) to a protein, resulting in modifications known as AMPylation and UMPylation. The sequence is that of Protein nucleotidyltransferase YdiU from Bacillus anthracis (strain A0248).